The sequence spans 309 residues: tRNA dimethylallyltransferase (309 aa).

Gly-11 to Ser-18 is a binding site for ATP. Thr-13–Ser-18 lines the substrate pocket. 2 interaction with substrate tRNA regions span residues Asp-36 to Gln-39 and Gln-160 to Arg-164.

Belongs to the IPP transferase family. Monomer. It depends on Mg(2+) as a cofactor.

The enzyme catalyses adenosine(37) in tRNA + dimethylallyl diphosphate = N(6)-dimethylallyladenosine(37) in tRNA + diphosphate. Functionally, catalyzes the transfer of a dimethylallyl group onto the adenine at position 37 in tRNAs that read codons beginning with uridine, leading to the formation of N6-(dimethylallyl)adenosine (i(6)A). The sequence is that of tRNA dimethylallyltransferase from Rickettsia felis (strain ATCC VR-1525 / URRWXCal2) (Rickettsia azadi).